Here is a 411-residue protein sequence, read N- to C-terminus: MGEKRKSRQAEVNIGMVGHVDHGKTTLTKALTGVWTDTHSEELRRGITIKIGFADAEIRRCPNCGRYSTSPVCPYCGHETEFVRRVSFIDAPGHEALMTTMLAGASLMDGAILVIAANEPCPRPQTREHLMALQIIGQKNIIIAQNKIELVDKEKALENYRQIKEFIEGTVAENAPIIPISALHGANIDVLVKAIEDFIPTPKRDPNKPPKMLVLRSFDVNKPGTPPEKLVGGVLGGSIVQGKLKVGDEIEIRPGVPYEEHGRIKYEPITTEIVSLQAGGQFVEEAYPGGLVGVGTKLDPYLTKGDLMAGNVVGKPGKLPPVWDSLRLEVHLLERVVGTEQELKVEPIKRKEVLLLNVGTARTMGLVTGLGKDEIEVKLQIPVCAEPGDRVAISRQIGSRWRLIGYGIIKE.

The tr-type G domain maps to 9-203; the sequence is QAEVNIGMVG…AIEDFIPTPK (195 aa). Positions 18 to 25 are G1; the sequence is GHVDHGKT. The Mg(2+) site is built by Asp-21, Thr-25, Gly-46, and Thr-48. 21–26 provides a ligand contact to GTP; sequence DHGKTT. The interval 46–50 is G2; it reads GITIK. Cys-61, Cys-64, Cys-73, and Cys-76 together coordinate Zn(2+). The tract at residues 90-93 is G3; it reads DAPG. GTP contacts are provided by residues 146–149 and 181–183; these read NKIE and SAL. The segment at 146–149 is G4; that stretch reads NKIE. The segment at 181 to 183 is G5; it reads SAL.

The protein belongs to the TRAFAC class translation factor GTPase superfamily. Classic translation factor GTPase family. EIF2G subfamily. As to quaternary structure, heterotrimer composed of an alpha, a beta and a gamma chain. It depends on Mg(2+) as a cofactor.

The enzyme catalyses GTP + H2O = GDP + phosphate + H(+). Its function is as follows. eIF-2 functions in the early steps of protein synthesis by forming a ternary complex with GTP and initiator tRNA. The chain is Translation initiation factor 2 subunit gamma from Pyrococcus abyssi (strain GE5 / Orsay).